The primary structure comprises 94 residues: Pyrimidine/purine nucleoside phosphorylase 2 (94 aa).

It belongs to the nucleoside phosphorylase PpnP family.

It carries out the reaction a purine D-ribonucleoside + phosphate = a purine nucleobase + alpha-D-ribose 1-phosphate. The enzyme catalyses adenosine + phosphate = alpha-D-ribose 1-phosphate + adenine. It catalyses the reaction cytidine + phosphate = cytosine + alpha-D-ribose 1-phosphate. The catalysed reaction is guanosine + phosphate = alpha-D-ribose 1-phosphate + guanine. It carries out the reaction inosine + phosphate = alpha-D-ribose 1-phosphate + hypoxanthine. The enzyme catalyses thymidine + phosphate = 2-deoxy-alpha-D-ribose 1-phosphate + thymine. It catalyses the reaction uridine + phosphate = alpha-D-ribose 1-phosphate + uracil. The catalysed reaction is xanthosine + phosphate = alpha-D-ribose 1-phosphate + xanthine. Catalyzes the phosphorolysis of diverse nucleosides, yielding D-ribose 1-phosphate and the respective free bases. Can use uridine, adenosine, guanosine, cytidine, thymidine, inosine and xanthosine as substrates. Also catalyzes the reverse reactions. The polypeptide is Pyrimidine/purine nucleoside phosphorylase 2 (Psychrobacter arcticus (strain DSM 17307 / VKM B-2377 / 273-4)).